The primary structure comprises 433 residues: Ribosome biogenesis protein WDR12 homolog (433 aa).

Residues 21–102 (VEVFVVSYRH…ESVISIECIV (82 aa)) are ubiquitin-like (UBL) domain. 7 WD repeats span residues 114 to 151 (ALLD…LTSS), 153 to 194 (LHEE…SSTF), 203 to 242 (GHER…TSTV), 270 to 310 (GHKD…QINT), 312 to 351 (AAKK…GTLV), 357 to 397 (GHCG…TPLY), and 401 to 433 (GHSD…RRKM).

The protein belongs to the WD repeat WDR12/YTM1 family.

It localises to the nucleus. The protein resides in the nucleolus. The protein localises to the nucleoplasm. Its function is as follows. Required for maturation of ribosomal RNAs and formation of the large ribosomal subunit. In Brugia malayi (Filarial nematode worm), this protein is Ribosome biogenesis protein WDR12 homolog.